The sequence spans 773 residues: Cadherin-5 (773 aa).

Residues 1-18 (MKKLILLFSLFLAPAFSY) form the signal peptide. Residues 19–40 (KENQKINQNFSSNNTSHKRLKR) constitute a propeptide that is removed on maturation. N-linked (GlcNAc...) asparagine glycans are attached at residues N27, N31, and N32. Cadherin domains lie at 39–144 (KRDW…APIF), 145–251 (VQKI…FPVF), 252–366 (KHPS…PPVF), 367–474 (TKLS…APEL), and 474–582 (LVYP…DFTF). The Extracellular portion of the chain corresponds to 41–595 (DWIWNRMHIR…RAKQVGVSVQ (555 aa)). E51, E52, D102, and E104 together coordinate Ca(2+). A glycan (N-linked (GlcNAc...) asparagine) is linked at N121. Ca(2+)-binding residues include D136, I137, N138, D139, and N140. N-linked (GlcNAc...) asparagine glycosylation is present at N150. 4 residues coordinate Ca(2+): D170, D172, H179, and D224. N263, N437, N519, and N531 each carry an N-linked (GlcNAc...) asparagine glycan. Residues 596–617 (ALVAIFICIFTIIAVIALLILL) form a helical membrane-spanning segment. Residues 618 to 773 (RKRHKKDLSG…GSEPNEDFVY (156 aa)) lie on the Cytoplasmic side of the membrane.

N-glycosylated. Post-translationally, O-glycosylated.

Its subcellular location is the cell junction. The protein localises to the adherens junction. It is found in the cell membrane. The protein resides in the cytoplasm. Its function is as follows. Cadherins are calcium-dependent cell adhesion proteins. They preferentially interact with themselves in a homophilic manner in connecting cells; cadherins may thus contribute to the sorting of heterogeneous cell types. This cadherin may play a important role in endothelial cell biology through control of the cohesion and organization of the intercellular junctions. Plays a role in coupling actin fibers to cell junctions in endothelial cells. Associates with CTNND1/p120-catenin to control CADH5 endocytosis. The polypeptide is Cadherin-5 (Gallus gallus (Chicken)).